The primary structure comprises 236 residues: UPF0257 lipoprotein YnfC (236 aa).

An N-terminal signal peptide occupies residues 1-16; sequence MKYKLLPCLLAIFLTG. Cys17 carries the N-palmitoyl cysteine lipid modification. Cys17 carries the S-diacylglycerol cysteine lipid modification.

Belongs to the UPF0257 family.

Its subcellular location is the cell membrane. This chain is UPF0257 lipoprotein YnfC, found in Escherichia coli O17:K52:H18 (strain UMN026 / ExPEC).